The chain runs to 283 residues: Small ribosomal subunit protein uS3 (283 aa).

One can recognise a KH type-2 domain in the interval 39–107; sequence VRAYLKTKLK…PVHVNIEEIR (69 aa). The tract at residues 219–283 is disordered; sequence ASDDDKKRRG…AAVSAEKAGE (65 aa). The segment covering 221 to 236 has biased composition (basic and acidic residues); the sequence is DDDKKRRGPRRDDGKP. The segment covering 237–260 has biased composition (low complexity); that stretch reads SGRPRAPRPEGQPGAAAPGSAPAA.

Belongs to the universal ribosomal protein uS3 family. Part of the 30S ribosomal subunit. Forms a tight complex with proteins S10 and S14.

Its function is as follows. Binds the lower part of the 30S subunit head. Binds mRNA in the 70S ribosome, positioning it for translation. The protein is Small ribosomal subunit protein uS3 of Janthinobacterium sp. (strain Marseille) (Minibacterium massiliensis).